The following is a 339-amino-acid chain: Deubiquitinase and deneddylase Dub2 (339 aa).

Residues isoleucine 36 to phenylalanine 56 form a helical membrane-spanning segment. Catalysis depends on residues histidine 203, aspartate 220, and cysteine 282.

This sequence belongs to the peptidase C48 family.

Its subcellular location is the secreted. It localises to the host cell. The protein localises to the membrane. Its function is as follows. Effector proteins function to alter host cell physiology and promote bacterial survival in host tissues. This protease possesses deubiquitinating and deneddylating activities. This chain is Deubiquitinase and deneddylase Dub2 (cdu2), found in Chlamydia trachomatis serovar A (strain ATCC VR-571B / DSM 19440 / HAR-13).